We begin with the raw amino-acid sequence, 350 residues long: GTPase Obg (350 aa).

An Obg domain is found at 1–159; it reads MRFIDQTEIF…FRLHLELKLL (159 aa). Positions 160-328 constitute an OBG-type G domain; sequence AEVGIIGLPN…LLQQVWEELD (169 aa). GTP is bound by residues 166–173, 191–195, 213–216, 280–283, and 309–311; these read GLPNAGKS, FTTLI, DIPG, NKID, and SAV. Mg(2+)-binding residues include S173 and T193.

The protein belongs to the TRAFAC class OBG-HflX-like GTPase superfamily. OBG GTPase family. Monomer. The cofactor is Mg(2+).

The protein resides in the cytoplasm. An essential GTPase which binds GTP, GDP and possibly (p)ppGpp with moderate affinity, with high nucleotide exchange rates and a fairly low GTP hydrolysis rate. Plays a role in control of the cell cycle, stress response, ribosome biogenesis and in those bacteria that undergo differentiation, in morphogenesis control. The polypeptide is GTPase Obg (Acaryochloris marina (strain MBIC 11017)).